The following is an 884-amino-acid chain: DNA replication licensing factor mcm2 (884 aa).

A compositionally biased stretch (polar residues) spans methionine 1–threonine 16. 2 disordered regions span residues methionine 1–alanine 61 and leucine 120–glutamate 151. The segment covering proline 47 to isoleucine 58 has biased composition (acidic residues). The C4-type zinc-finger motif lies at cysteine 314–cysteine 340. One can recognise an MCM domain in the interval isoleucine 458–valine 664. Positions 515 and 516 each coordinate ADP. The Arginine finger signature appears at serine 640 to aspartate 643.

This sequence belongs to the MCM family. Component of the mcm2-7 complex (RLF-M). The complex forms a toroidal hexameric ring with the proposed subunit order mcm2-mcm6-mcm4-mcm7-mcm3-mcm5. Component of the replisome complex. Component of the CMG helicase complex, composed of the mcm2-7 complex, the GINS complex and cdc45. In terms of processing, may be in a phosphorylated state in the mitotic mcm complex. Phosphorylated in the interphase mcm complex. Phosphorylated by the cdc7-dbf4 and cdc7-dbf4b complexes.

The protein localises to the nucleus. It localises to the chromosome. The enzyme catalyses ATP + H2O = ADP + phosphate + H(+). Its function is as follows. Acts as a component of the MCM2-7 complex (MCM complex) which is the replicative helicase essential for 'once per cell cycle' DNA replication initiation and elongation in eukaryotic cells. Core component of CDC45-MCM-GINS (CMG) helicase, the molecular machine that unwinds template DNA during replication, and around which the replisome is built. The active ATPase sites in the MCM2-7 ring are formed through the interaction surfaces of two neighboring subunits such that a critical structure of a conserved arginine finger motif is provided in trans relative to the ATP-binding site of the Walker A box of the adjacent subunit. The six ATPase active sites, however, are likely to contribute differentially to the complex helicase activity. Required for the entry in S phase and for cell division. The protein is DNA replication licensing factor mcm2 of Xenopus tropicalis (Western clawed frog).